Reading from the N-terminus, the 206-residue chain is Large ribosomal subunit protein uL4 (206 aa).

Residues 63 to 97 (MYKQKGTGRARHHSARAPQFRGGGKAHGPVVRSHE) form a disordered region. The segment covering 64 to 77 (YKQKGTGRARHHSA) has biased composition (basic residues).

Belongs to the universal ribosomal protein uL4 family. As to quaternary structure, part of the 50S ribosomal subunit.

One of the primary rRNA binding proteins, this protein initially binds near the 5'-end of the 23S rRNA. It is important during the early stages of 50S assembly. It makes multiple contacts with different domains of the 23S rRNA in the assembled 50S subunit and ribosome. Its function is as follows. Forms part of the polypeptide exit tunnel. The protein is Large ribosomal subunit protein uL4 of Rhizobium etli (strain CIAT 652).